The primary structure comprises 428 residues: Adenylosuccinate synthetase (428 aa).

Residues 12 to 18 (GDEGKGK) and 40 to 42 (GHT) contribute to the GTP site. Catalysis depends on Asp13, which acts as the Proton acceptor. Residues Asp13 and Gly40 each coordinate Mg(2+). IMP contacts are provided by residues 13 to 16 (DEGK), 38 to 41 (NAGH), Thr129, Arg143, Gln224, Thr239, and Arg303. His41 serves as the catalytic Proton donor. 299 to 305 (VTTGRIR) contributes to the substrate binding site. Residues Arg305, 331–333 (KVD), and 410–412 (AYG) contribute to the GTP site.

The protein belongs to the adenylosuccinate synthetase family. In terms of assembly, homodimer. It depends on Mg(2+) as a cofactor.

The protein localises to the cytoplasm. It carries out the reaction IMP + L-aspartate + GTP = N(6)-(1,2-dicarboxyethyl)-AMP + GDP + phosphate + 2 H(+). Its pathway is purine metabolism; AMP biosynthesis via de novo pathway; AMP from IMP: step 1/2. Its function is as follows. Plays an important role in the de novo pathway of purine nucleotide biosynthesis. Catalyzes the first committed step in the biosynthesis of AMP from IMP. In Francisella tularensis subsp. novicida (strain U112), this protein is Adenylosuccinate synthetase.